Reading from the N-terminus, the 216-residue chain is Protein-L-isoaspartate O-methyltransferase (216 aa).

Residue Ser66 is part of the active site.

This sequence belongs to the methyltransferase superfamily. L-isoaspartyl/D-aspartyl protein methyltransferase family.

It is found in the cytoplasm. The enzyme catalyses [protein]-L-isoaspartate + S-adenosyl-L-methionine = [protein]-L-isoaspartate alpha-methyl ester + S-adenosyl-L-homocysteine. Functionally, catalyzes the methyl esterification of L-isoaspartyl residues in peptides and proteins that result from spontaneous decomposition of normal L-aspartyl and L-asparaginyl residues. It plays a role in the repair and/or degradation of damaged proteins. In Colwellia psychrerythraea (strain 34H / ATCC BAA-681) (Vibrio psychroerythus), this protein is Protein-L-isoaspartate O-methyltransferase.